A 100-amino-acid polypeptide reads, in one-letter code: Small ribosomal subunit protein bS21 (100 aa).

Positions 61 to 100 (KLQREGLLPMKPKPVFGAGPGGDRGRGPAAGAGAGPRGPR) are disordered. Positions 78 to 100 (AGPGGDRGRGPAAGAGAGPRGPR) are enriched in gly residues.

This sequence belongs to the bacterial ribosomal protein bS21 family.

The sequence is that of Small ribosomal subunit protein bS21 from Rhodopseudomonas palustris (strain BisB18).